The sequence spans 229 residues: Large ribosomal subunit protein uL1 (229 aa).

This sequence belongs to the universal ribosomal protein uL1 family. As to quaternary structure, part of the 50S ribosomal subunit.

Its function is as follows. Binds directly to 23S rRNA. The L1 stalk is quite mobile in the ribosome, and is involved in E site tRNA release. Protein L1 is also a translational repressor protein, it controls the translation of the L11 operon by binding to its mRNA. This is Large ribosomal subunit protein uL1 from Streptococcus agalactiae serotype Ia (strain ATCC 27591 / A909 / CDC SS700).